The chain runs to 309 residues: NmrA-like family domain-containing protein 1 (309 aa).

NADP(+) is bound by residues 11–16 (GATGAQ), 37–41 (RNPEQ), 58–59 (DQ), 79–81 (TNY), Lys-102, Lys-143, and 165–168 (YFEN). The segment at 163-199 (PCYFENLLSYFLPQKAADGKSFLLDLPMGDVPMDGMS) is interaction with ASS1.

Belongs to the NmrA-type oxidoreductase family. Homodimer. Interacts with ASS1. Interaction is enhanced by low NADPH/NADP(+) ratios, which results in inhibition of ASS1 activity.

Its subcellular location is the cytoplasm. It is found in the perinuclear region. The protein resides in the nucleus. Functionally, redox sensor protein. Undergoes restructuring and subcellular redistribution in response to changes in intracellular NADPH/NADP(+) levels. At low NADPH concentrations the protein is found mainly as a monomer, and binds argininosuccinate synthase (ASS1), the enzyme involved in nitric oxide synthesis. Association with ASS1 impairs its activity and reduces the production of nitric oxide, which subsecuently prevents apoptosis. Under normal NADPH concentrations, the protein is found as a dimer and hides the binding site for ASS1. The homodimer binds one molecule of NADPH. Has higher affinity for NADPH than for NADP(+). Binding to NADPH is necessary to form a stable dimer. This Mus musculus (Mouse) protein is NmrA-like family domain-containing protein 1 (Nmral1).